The following is a 516-amino-acid chain: Cilia- and flagella-associated protein 53 (516 aa).

Coiled coils occupy residues 217–283 (EEKK…LQVK) and 316–440 (MQGY…RQMK). Basic and acidic residues-rich tracts occupy residues 417-436 (KELL…DRNA) and 461-472 (QAEREEEQREFE). Disordered regions lie at residues 417–443 (KELL…KVAQ) and 455–475 (YQQS…EAGL).

This sequence belongs to the CFAP53 family.

Its subcellular location is the cytoplasm. It localises to the cytoskeleton. It is found in the cilium axoneme. The protein resides in the microtubule organizing center. The protein localises to the centrosome. Its subcellular location is the centriolar satellite. Microtubule inner protein (MIP) part of the dynein-decorated doublet microtubules (DMTs) in cilia axoneme, which is required for motile cilia beating. Regulates motility patterns of both 9+0 and 9+2 motile cilia through differential localization and recruitment of axonemal dynein components. Required for motile cilium formation and movement. Involved in the establishment of left-right symmetry during embryogenesis. The sequence is that of Cilia- and flagella-associated protein 53 from Xenopus laevis (African clawed frog).